The chain runs to 174 residues: CDP-archaeol synthase (174 aa).

5 helical membrane-spanning segments follow: residues 14 to 34 (ILEA…PVVA), 59 to 79 (IEGL…AALA), 83 to 103 (MLLA…DMAG), 118 to 138 (APLL…IALG), and 149 to 169 (AAAA…LLGL).

This sequence belongs to the CDP-archaeol synthase family. Mg(2+) is required as a cofactor.

It is found in the cell membrane. The catalysed reaction is 2,3-bis-O-(geranylgeranyl)-sn-glycerol 1-phosphate + CTP + H(+) = CDP-2,3-bis-O-(geranylgeranyl)-sn-glycerol + diphosphate. It functions in the pathway membrane lipid metabolism; glycerophospholipid metabolism. Catalyzes the formation of CDP-2,3-bis-(O-geranylgeranyl)-sn-glycerol (CDP-archaeol) from 2,3-bis-(O-geranylgeranyl)-sn-glycerol 1-phosphate (DGGGP) and CTP. This reaction is the third ether-bond-formation step in the biosynthesis of archaeal membrane lipids. The polypeptide is CDP-archaeol synthase (Aeropyrum pernix (strain ATCC 700893 / DSM 11879 / JCM 9820 / NBRC 100138 / K1)).